The sequence spans 893 residues: Sperm-associated antigen 1 (893 aa).

Positions 112-126 (ENTRHFHDPEKHPGV) are enriched in basic and acidic residues. Positions 112–155 (ENTRHFHDPEKHPGVEDPLPPVRGSNSCPRGGKETSSKSKTAKK) are disordered. TPR repeat units lie at residues 213–246 (ANRE…LPTA), 247–279 (TAYN…EPGN), and 280–313 (IKAL…EPDN). Disordered stretches follow at residues 324 to 344 (EREL…KRMV), 349 to 368 (ENSG…DDGV), and 373 to 437 (MGNI…SRGN). A Phosphoserine modification is found at S351. A compositionally biased stretch (polar residues) spans 403 to 415 (QEGQPETGTASTS). The segment covering 416–437 (DNHDLEERRAADSPGDLKSRGN) has biased composition (basic and acidic residues). 5 TPR repeats span residues 429–463 (PGDL…EPTG), 471–504 (SILY…QPFA), 506–538 (KPLL…DCRI), 605–638 (FQAL…NSKA), and 639–672 (CAIY…DSKN). 630-637 (ECLKINSK) is a binding site for GTP. S703 is modified (phosphoserine). The disordered stretch occupies residues 704–756 (PDSSEAARHLDTKNDTAPPSRERERRRIEIQEVDDSSDEEPERPAEASAVEEG). Over residues 708–733 (EAARHLDTKNDTAPPSRERERRRIEI) the composition is skewed to basic and acidic residues. Residues 734–744 (QEVDDSSDEEP) are compositionally biased toward acidic residues. A phosphoserine mark is found at S739, S740, and S758.

Testis and sperm.

It localises to the cytoplasm. The protein resides in the dynein axonemal particle. May play a role in the cytoplasmic assembly of the ciliary dynein arms. Binds GTP and has GTPase activity. Plays a role in fertilization. This Rattus norvegicus (Rat) protein is Sperm-associated antigen 1 (Spag1).